The sequence spans 584 residues: 2-succinyl-5-enolpyruvyl-6-hydroxy-3-cyclohexene-1-carboxylate synthase (584 aa).

Belongs to the TPP enzyme family. MenD subfamily. As to quaternary structure, homodimer. Mg(2+) serves as cofactor. Mn(2+) is required as a cofactor. Requires thiamine diphosphate as cofactor.

It catalyses the reaction isochorismate + 2-oxoglutarate + H(+) = 5-enolpyruvoyl-6-hydroxy-2-succinyl-cyclohex-3-ene-1-carboxylate + CO2. It participates in quinol/quinone metabolism; 1,4-dihydroxy-2-naphthoate biosynthesis; 1,4-dihydroxy-2-naphthoate from chorismate: step 2/7. It functions in the pathway quinol/quinone metabolism; menaquinone biosynthesis. In terms of biological role, catalyzes the thiamine diphosphate-dependent decarboxylation of 2-oxoglutarate and the subsequent addition of the resulting succinic semialdehyde-thiamine pyrophosphate anion to isochorismate to yield 2-succinyl-5-enolpyruvyl-6-hydroxy-3-cyclohexene-1-carboxylate (SEPHCHC). This chain is 2-succinyl-5-enolpyruvyl-6-hydroxy-3-cyclohexene-1-carboxylate synthase, found in Bacillus cereus (strain ATCC 10987 / NRS 248).